The following is a 270-amino-acid chain: uncharacterized protein (270 aa).

The 50-residue stretch at 1–50 folds into the HTH lysR-type domain; that stretch reads LTEVVKAQSFTKAAENLYTSQPSISRDIKRLENDYDVKVFEFKHSKMTLT. Positions 10–29 form a DNA-binding region, H-T-H motif; sequence FTKAAENLYTSQPSISRDIK.

Belongs to the LysR transcriptional regulatory family.

This is an uncharacterized protein from Staphylococcus xylosus.